Reading from the N-terminus, the 206-residue chain is Ribosomal RNA large subunit methyltransferase E (206 aa).

Residues glycine 61, tryptophan 63, aspartate 81, aspartate 97, and aspartate 122 each contribute to the S-adenosyl-L-methionine site. The active-site Proton acceptor is lysine 162.

It belongs to the class I-like SAM-binding methyltransferase superfamily. RNA methyltransferase RlmE family.

The protein localises to the cytoplasm. The catalysed reaction is uridine(2552) in 23S rRNA + S-adenosyl-L-methionine = 2'-O-methyluridine(2552) in 23S rRNA + S-adenosyl-L-homocysteine + H(+). Its function is as follows. Specifically methylates the uridine in position 2552 of 23S rRNA at the 2'-O position of the ribose in the fully assembled 50S ribosomal subunit. This is Ribosomal RNA large subunit methyltransferase E from Neisseria gonorrhoeae (strain NCCP11945).